The chain runs to 640 residues: MAEVAEVAAESGGGGDSGVGACERGVAPIKAQYRTTKERFHEYLDADKQEGACQETPTEGPAEPEAKRIRLEDGQENGKTEVAVESHERQVPKRARGQNKSRPHMKPAHYDKERLCPSLLQESATPCAFGDRCRFLHDVGRYLETKPADLGPHCVLFNTFGRCPYSMTCRFAGAHLGPEGQNLVQEEVVARCAQLPSVRNGLDRALQQQLRKRQVCFERAEQALSHLTQGPMPTIAPESTVATLTPKHSSCHVQLDNVGGDGARQGSPVPTCGPLTDEDVVRLRPCEKKRLDISGKLYLAPLTTCGNLPFRRICKRFGADVTCGEMAMCTNLLQGQMSEWALLKRHPCEDIFGVQLEGAFPDTMTKCAELLNRTIDVDFVDINVGCPIDLVYKKGGGCALMNRSAKFQQIVRGMNEVLDVPLTVKMRTGVQERVSLAHRLLPELRNWGVALVTLHGRSREQRYTRLADWPYIEQCAKVASPMPLFGNGDILSFEDANCAMQTGVAGIMVARGALLKPWLFTEIKEQRHWDISSSERLDILRDFTHYGLEHWGSDTQGVERTRRFLLEWLSFLCRYVPVGLLERLPQRINERPPYYLGRDYLETLMASQQAADWIRISEMLLGPVPPGFVFLPKHKANAYK.

Over residues Met1–Glu10 the composition is skewed to low complexity. Disordered stretches follow at residues Met1–Cys22 and Asp47–Lys106. At Ala2 the chain carries N-acetylalanine. A compositionally biased stretch (basic and acidic residues) spans Pro64–Val91. Basic residues predominate over residues Pro92–Lys106. 2 C3H1-type zinc fingers span residues Tyr110 to Gly140 and Ala148 to Pro178. Position 267 is a phosphoserine (Ser267). FMN-binding positions include Pro301–Thr303 and Gln355. The Proton donor role is filled by Cys386. A Glycyl lysine isopeptide (Lys-Gly) (interchain with G-Cter in SUMO2) cross-link involves residue Lys406. FMN is bound by residues Lys425, His455, Asn487–Asp489, and Ala510–Arg511.

It belongs to the Dus family. Dus3 subfamily. The cofactor is FMN.

It catalyses the reaction 5,6-dihydrouridine(47) in tRNA + NAD(+) = uridine(47) in tRNA + NADH + H(+). It carries out the reaction 5,6-dihydrouridine(47) in tRNA + NADP(+) = uridine(47) in tRNA + NADPH + H(+). The catalysed reaction is a 5,6-dihydrouridine in mRNA + NAD(+) = a uridine in mRNA + NADH + H(+). The enzyme catalyses a 5,6-dihydrouridine in mRNA + NADP(+) = a uridine in mRNA + NADPH + H(+). Its function is as follows. Catalyzes the synthesis of dihydrouridine, a modified base, in various RNAs, such as tRNAs, mRNAs and some long non-coding RNAs (lncRNAs). Mainly modifies the uridine in position 47 (U47) in the D-loop of most cytoplasmic tRNAs. Also able to mediate the formation of dihydrouridine in some mRNAs, thereby regulating their translation. In Rattus norvegicus (Rat), this protein is tRNA-dihydrouridine(47) synthase [NAD(P)(+)]-like.